Here is a 426-residue protein sequence, read N- to C-terminus: MPRKHSEQLFRQAQKHIPGGVNSPVRAFKSVGGTPVFFHSARGAHLFDEDDNKYIDYVGSWGPMILGHNHPHVVAAVQAAVEQGLSFGAPTATEVAMADKVCELVPSMDMVRMVNSGTEATMSAIRLARGYTGRNKIIKFEGCYHGHVDSLLVKAGSGAIAIPGSPGVPEAVTADTLVLDYNDAASVTQAFKEHGDDIAAVIVEPVAGNMNCVPATENFLQTLRQQCDDNGAVLIFDEVMSGFRVALGGAQGHYGITPDMTTLGKIVGGGMPVGAFGGKQAIMEHLAPLGPVYQAGTLSGNPVAMAAGLATLNLISEPGFHQALAEKTTRLLEGLTAAAHAEGVAFTTAQAGAMFGLFFTDQNRISSFTEVMACDSERFNRFFHAMLDQGIYLAPSAFEAGFVSAAHSNDDIDATITAARKAFGKI.

An N6-(pyridoxal phosphate)lysine modification is found at Lys-265.

This sequence belongs to the class-III pyridoxal-phosphate-dependent aminotransferase family. HemL subfamily. As to quaternary structure, homodimer. It depends on pyridoxal 5'-phosphate as a cofactor.

The protein localises to the cytoplasm. The enzyme catalyses (S)-4-amino-5-oxopentanoate = 5-aminolevulinate. Its pathway is porphyrin-containing compound metabolism; protoporphyrin-IX biosynthesis; 5-aminolevulinate from L-glutamyl-tRNA(Glu): step 2/2. The protein is Glutamate-1-semialdehyde 2,1-aminomutase of Alcanivorax borkumensis (strain ATCC 700651 / DSM 11573 / NCIMB 13689 / SK2).